The chain runs to 343 residues: Glucokinase (343 aa).

Residue 21–26 (ADVGGT) participates in ATP binding.

This sequence belongs to the bacterial glucokinase family.

Its subcellular location is the cytoplasm. It carries out the reaction D-glucose + ATP = D-glucose 6-phosphate + ADP + H(+). The chain is Glucokinase from Cupriavidus pinatubonensis (strain JMP 134 / LMG 1197) (Cupriavidus necator (strain JMP 134)).